We begin with the raw amino-acid sequence, 309 residues long: Anamorsin (309 aa).

Residues 6-172 form an N-terminal SAM-like domain region; it reads ISPGQLVAVF…KPNFEVGSSS (167 aa). Positions 173 to 222 are linker; that stretch reads QLKLLHKKSSSVKPVVDPATAKLWTLSANDMEDDSMDLIDSDELLDPEDL. 3 positions are modified to phosphoserine: S182, S183, and S213. [2Fe-2S] cluster is bound by residues C235, C244, C247, and C249. Residues 235–249 form a fe-S binding site A region; it reads CGEGKKRKACKNCTC. The residue at position 269 (S269) is a Phosphoserine. C271, C274, C282, and C285 together coordinate [4Fe-4S] cluster. 2 consecutive short sequence motifs (cx2C motif) follow at residues 271–274 and 282–285; these read CGNC and CANC. Positions 271–285 are fe-S binding site B; it reads CGNCYLGDAFRCANC. 2 positions are modified to phosphoserine: S302 and S304.

Belongs to the anamorsin family. Monomer. Interacts with NDOR1. Interacts with CHCHD4. [2Fe-2S] cluster is required as a cofactor. Requires [4Fe-4S] cluster as cofactor.

It is found in the cytoplasm. Its subcellular location is the nucleus. The protein resides in the mitochondrion intermembrane space. Its function is as follows. Component of the cytosolic iron-sulfur (Fe-S) protein assembly (CIA) machinery required for the maturation of extramitochondrial Fe-S proteins. Part of an electron transfer chain functioning in an early step of cytosolic Fe-S biogenesis, facilitating the de novo assembly of a [4Fe-4S] cluster on the scaffold complex NUBP1-NUBP2. Electrons are transferred to CIAPIN1 from NADPH via the FAD- and FMN-containing protein NDOR1. NDOR1-CIAPIN1 are also required for the assembly of the diferric tyrosyl radical cofactor of ribonucleotide reductase (RNR), probably by providing electrons for reduction during radical cofactor maturation in the catalytic small subunit. Has anti-apoptotic effects in the cell. Involved in negative control of cell death upon cytokine withdrawal. Promotes development of hematopoietic cells. The protein is Anamorsin of Rattus norvegicus (Rat).